Here is a 417-residue protein sequence, read N- to C-terminus: MKTLIILKDLTKVFDNQLILRGINLEIKQNEFVTLLGPSGCGKTTILRILGGFENPSSGEVLFQGKSILNVAAHKRPINTVFQKYALFPHLNVFENVAFGLRLKDFNSKIKDNLDINETHYKTSKANLSKTFHQELTKDLAQEKTTQITNNFNNQIEALTKDFEAKQTALKCKKINKKEQEEQIQKEVLKYIKIMGLQGLEKRTIEQLSGGQQQRVAIARALINKPQVLLLDEPLSNLDLKLKQEMQYELKEIQKNSGITFLFVTHDQEEAFTMSDKVVVMNNGEIQQIGSPEDIYNEPANRFVAQFVGESNLIKGVMKDDFLVHFDNQTFNCVDKGFRKEENVDIVIRPEDIDIVYQGKGLITGIVQSIIFKGVHWEIDVKTAQRTYIIHTTDHVELNKKIDITFNPEDIHVMEIW.

Residues isoleucine 5–valine 308 enclose the ABC transporter domain. Residue glycine 37 to threonine 44 participates in ATP binding. The tract at residues aspartate 105–lysine 177 is insert.

Belongs to the ABC transporter superfamily. Spermidine/putrescine importer (TC 3.A.1.11.1) family. The complex is composed of two ATP-binding proteins (PotA), two transmembrane proteins (PotB and PotC) and a solute-binding protein (PotD).

It localises to the cell membrane. It catalyses the reaction ATP + H2O + polyamine-[polyamine-binding protein]Side 1 = ADP + phosphate + polyamineSide 2 + [polyamine-binding protein]Side 1.. Part of the ABC transporter complex PotABCD involved in spermidine/putrescine import. Responsible for energy coupling to the transport system. The sequence is that of Spermidine/putrescine import ATP-binding protein PotA from Aster yellows witches'-broom phytoplasma (strain AYWB).